Consider the following 136-residue polypeptide: Large ribosomal subunit protein uL16 (136 aa).

The protein belongs to the universal ribosomal protein uL16 family. As to quaternary structure, part of the 50S ribosomal subunit.

Its function is as follows. Binds 23S rRNA and is also seen to make contacts with the A and possibly P site tRNAs. This Rickettsia peacockii (strain Rustic) protein is Large ribosomal subunit protein uL16.